The sequence spans 64 residues: Leader peptide SpeFL (64 aa).

The Ornithine recognition loop signature appears at 32–38; that stretch reads HIRRTRH. R35 provides a ligand contact to L-ornithine.

Belongs to the speF operon leader peptide family. Binds ornithine in stalled 70S ribosomes, blocking the upper two-thirds of the exit tunnel. Contacts 23S rRNA and ribosomal proteins L4 and L22.

A small protein (arrest peptide) encoded upstream of inducible ornithine carboxylase gene (speF) that controls expression of downstream genes (usually speF and potE) by transcriptional and translational attenuation. The polypeptide is Leader peptide SpeFL (Haemophilus influenzae (strain ATCC 51907 / DSM 11121 / KW20 / Rd)).